The chain runs to 287 residues: 4-hydroxybenzoate octaprenyltransferase (287 aa).

The next 9 helical transmembrane spans lie at 21–41 (VGIF…AKGA), 44–64 (FKIA…GCIV), 91–111 (VTEA…LVLL), 112–132 (LNRL…VYPF), 139–159 (LPQL…FAAT), 160–180 (VGHV…WPIV), 211–231 (LMIG…GWYL), 235–255 (YWFY…QFLI), and 263–283 (CFAA…GILL).

Belongs to the UbiA prenyltransferase family. Mg(2+) is required as a cofactor.

It is found in the cell inner membrane. The enzyme catalyses all-trans-octaprenyl diphosphate + 4-hydroxybenzoate = 4-hydroxy-3-(all-trans-octaprenyl)benzoate + diphosphate. It participates in cofactor biosynthesis; ubiquinone biosynthesis. Functionally, catalyzes the prenylation of para-hydroxybenzoate (PHB) with an all-trans polyprenyl group. Mediates the second step in the final reaction sequence of ubiquinone-8 (UQ-8) biosynthesis, which is the condensation of the polyisoprenoid side chain with PHB, generating the first membrane-bound Q intermediate 3-octaprenyl-4-hydroxybenzoate. The sequence is that of 4-hydroxybenzoate octaprenyltransferase from Coxiella burnetii (strain CbuK_Q154) (Coxiella burnetii (strain Q154)).